A 203-amino-acid chain; its full sequence is UPF0637 protein Sca_0732 (203 aa).

It belongs to the UPF0637 family.

This is UPF0637 protein Sca_0732 from Staphylococcus carnosus (strain TM300).